Here is a 479-residue protein sequence, read N- to C-terminus: RHO1 GEF localizing protein 1 (479 aa).

Positions 460–479 (SQKDPSRTDPSKLRRVPVIQ) are disordered.

Its function is as follows. Regulator of RHO1 signaling that acts as a cofactor required for the efficient localization of the TUS1 GTP exchange factor (GEF) for RHO1 to the bud neck during all phases of cytokinesis. RHO1 is a key, essential hub protein in the cell wall integrity (CWI) pathway in which activated RHO1-GTP binds directly to and activates multiple different downstream effectors required for cell wall synthesis and actin assembly during cytokinesis. In Saccharomyces cerevisiae (strain ATCC 204508 / S288c) (Baker's yeast), this protein is RHO1 GEF localizing protein 1.